A 218-amino-acid polypeptide reads, in one-letter code: Pyridoxine/pyridoxamine 5'-phosphate oxidase (218 aa).

Substrate contacts are provided by residues 12–15 (RMSY) and R70. FMN is bound by residues 65–70 (RTVLLR), 80–81 (YT), K87, and Q109. Residues Y127, R131, and S135 each contribute to the substrate site. Residues 145–146 (QS) and W191 each bind FMN. 197–199 (RLH) serves as a coordination point for substrate. Residue R201 participates in FMN binding.

This sequence belongs to the pyridoxamine 5'-phosphate oxidase family. In terms of assembly, homodimer. The cofactor is FMN.

The enzyme catalyses pyridoxamine 5'-phosphate + O2 + H2O = pyridoxal 5'-phosphate + H2O2 + NH4(+). It carries out the reaction pyridoxine 5'-phosphate + O2 = pyridoxal 5'-phosphate + H2O2. The protein operates within cofactor metabolism; pyridoxal 5'-phosphate salvage; pyridoxal 5'-phosphate from pyridoxamine 5'-phosphate: step 1/1. It functions in the pathway cofactor metabolism; pyridoxal 5'-phosphate salvage; pyridoxal 5'-phosphate from pyridoxine 5'-phosphate: step 1/1. In terms of biological role, catalyzes the oxidation of either pyridoxine 5'-phosphate (PNP) or pyridoxamine 5'-phosphate (PMP) into pyridoxal 5'-phosphate (PLP). The sequence is that of Pyridoxine/pyridoxamine 5'-phosphate oxidase from Acinetobacter baylyi (strain ATCC 33305 / BD413 / ADP1).